We begin with the raw amino-acid sequence, 257 residues long: Imidazole glycerol phosphate synthase subunit HisF (257 aa).

Catalysis depends on residues aspartate 11 and aspartate 130.

This sequence belongs to the HisA/HisF family. As to quaternary structure, heterodimer of HisH and HisF.

It is found in the cytoplasm. It catalyses the reaction 5-[(5-phospho-1-deoxy-D-ribulos-1-ylimino)methylamino]-1-(5-phospho-beta-D-ribosyl)imidazole-4-carboxamide + L-glutamine = D-erythro-1-(imidazol-4-yl)glycerol 3-phosphate + 5-amino-1-(5-phospho-beta-D-ribosyl)imidazole-4-carboxamide + L-glutamate + H(+). Its pathway is amino-acid biosynthesis; L-histidine biosynthesis; L-histidine from 5-phospho-alpha-D-ribose 1-diphosphate: step 5/9. Functionally, IGPS catalyzes the conversion of PRFAR and glutamine to IGP, AICAR and glutamate. The HisF subunit catalyzes the cyclization activity that produces IGP and AICAR from PRFAR using the ammonia provided by the HisH subunit. The polypeptide is Imidazole glycerol phosphate synthase subunit HisF (Bradyrhizobium diazoefficiens (strain JCM 10833 / BCRC 13528 / IAM 13628 / NBRC 14792 / USDA 110)).